The chain runs to 783 residues: Polyribonucleotide nucleotidyltransferase 1, mitochondrial (783 aa).

The N-terminal 45 residues, 1-45, are a transit peptide targeting the mitochondrion; it reads MAACRLCCLCPCLRPLGCGPLGRPGRNRALSYLQMRALWSSTGSR. N6-acetyllysine occurs at positions 250, 264, and 285. Position 552 is an N6-succinyllysine (Lys552). Positions 605–664 constitute a KH domain; that stretch reads PVVETVKVPLSKRAKFVGPGGYHLKKLQAETGVTISQVDEETFSIFAPTPTAMHEARDFI. The S1 motif domain maps to 679-750; that stretch reads GAVYTATITE…ADGRMRLSRK (72 aa). Phosphoserine is present on Ser754.

Belongs to the polyribonucleotide nucleotidyltransferase family. Homotrimer; in free form. Homooligomer. Component of the mitochondrial degradosome (mtEXO) complex which is a heteropentamer containing 2 copies of SUPV3L1 and 3 copies of PNPT1. As part of the mitochondrial degradosome complex, interacts with GRSF1 in an RNA-dependent manner; the interaction enhances the activity of the complex. Interacts with TCL1A; the interaction has no effect on PNPT1 exonuclease activity.

The protein localises to the cytoplasm. Its subcellular location is the mitochondrion matrix. It localises to the mitochondrion intermembrane space. It catalyses the reaction RNA(n+1) + phosphate = RNA(n) + a ribonucleoside 5'-diphosphate. Its function is as follows. RNA-binding protein implicated in numerous RNA metabolic processes. Catalyzes the phosphorolysis of single-stranded polyribonucleotides processively in the 3'-to-5' direction. Mitochondrial intermembrane factor with RNA-processing exoribonulease activity. Component of the mitochondrial degradosome (mtEXO) complex, that degrades 3' overhang double-stranded RNA with a 3'-to-5' directionality in an ATP-dependent manner. Involved in the degradation of non-coding mitochondrial transcripts (MT-ncRNA) and tRNA-like molecules. Required for correct processing and polyadenylation of mitochondrial mRNAs. Plays a role as a cytoplasmic RNA import factor that mediates the translocation of small RNA components, like the 5S RNA, the RNA subunit of ribonuclease P and the mitochondrial RNA-processing (MRP) RNA, into the mitochondrial matrix. Plays a role in mitochondrial morphogenesis and respiration; regulates the expression of the electron transport chain (ETC) components at the mRNA and protein levels. In the cytoplasm, shows a 3'-to-5' exoribonuclease mediating mRNA degradation activity; degrades c-myc mRNA upon treatment with IFNB1/IFN-beta, resulting in a growth arrest in melanoma cells. Regulates the stability of specific mature miRNAs in melanoma cells; specifically and selectively degrades miR-221, preferentially. Also plays a role in RNA cell surveillance by cleaning up oxidized RNAs. Binds to the RNA subunit of ribonuclease P, MRP RNA and miR-221 microRNA. This is Polyribonucleotide nucleotidyltransferase 1, mitochondrial (Pnpt1) from Mus musculus (Mouse).